Reading from the N-terminus, the 164-residue chain is Putative pre-16S rRNA nuclease (164 aa).

It belongs to the YqgF nuclease family.

It localises to the cytoplasm. Its function is as follows. Could be a nuclease involved in processing of the 5'-end of pre-16S rRNA. The sequence is that of Putative pre-16S rRNA nuclease from Rhizobium rhizogenes (strain K84 / ATCC BAA-868) (Agrobacterium radiobacter).